Consider the following 916-residue polypeptide: DNA mismatch repair protein MutS (916 aa).

Position 665–672 (665–672 (GPNMAGKS)) interacts with ATP.

It belongs to the DNA mismatch repair MutS family.

This protein is involved in the repair of mismatches in DNA. It is possible that it carries out the mismatch recognition step. This protein has a weak ATPase activity. The polypeptide is DNA mismatch repair protein MutS (Bradyrhizobium sp. (strain ORS 278)).